The primary structure comprises 1595 residues: Collagen-like protein 2 (1595 aa).

N-linked (GlcNAc...) asparagine; by host glycans are attached at residues Asn87 and Asn134. Collagen-like domains are found at residues 97 to 155 (LRGE…NGDV), 175 to 233 (QVGL…KGEG), 236 to 295 (GSKG…KGDI), and 299 to 358 (GIKG…KGMK). The segment covering 181–190 (SQGDQGYKGD) has biased composition (low complexity). Disordered stretches follow at residues 181–577 (SQGD…SPDL) and 604–1326 (TDIK…GIKG). Composition is skewed to basic and acidic residues over residues 191–200 (QGSKGDKGQK), 209–448 (KGDK…KGTK), 456–466 (YKGDIGDKGIK), 474–501 (DKGD…DKGY), 510–561 (DNGE…DKGE), 606–615 (IKGEKGDKGE), 622–702 (KGDK…DKGD), 718–825 (KGDK…DKGI), 832–883 (KGDK…KGFK), 895–1041 (KGDK…DKGI), 1048–1098 (KGNK…DQGT), 1107–1151 (KGDK…KGIK), 1159–1250 (NKGD…KGDQ), and 1265–1300 (KGDK…DQGI). N-linked (GlcNAc...) asparagine; by host glycosylation is found at Asn274, Asn280, and Asn286. N-linked (GlcNAc...) asparagine; by host glycosylation is found at Asn373, Asn382, Asn400, and Asn409. Collagen-like domains lie at 380-559 (GDNG…KGDK), 608-907 (GEKG…KGEN), 920-1039 (GDKG…KGDK), 1043-1102 (GTNG…KGET), and 1128-1307 (GDQG…SGAS). 3 N-linked (GlcNAc...) asparagine; by host glycosylation sites follow: Asn1345, Asn1420, and Asn1545. Positions 1538–1585 (SAFDKGGNGSIRFNPPSSGTKGSGGGGSVQGGGGTIPNDGYPGGNGGP) are disordered. The segment covering 1558–1585 (KGSGGGGSVQGGGGTIPNDGYPGGNGGP) has biased composition (gly residues).

In terms of processing, may be hydroxylated on lysine by the viral-encoded procollagen-lysine,2-oxoglutarate 5-dioxygenase.

It localises to the virion. Its function is as follows. May participate in the formation of a layer of cross-linked glycosylated fibrils at the viral surface thus giving it a hairy-like appearance. The protein is Collagen-like protein 2 of Acanthamoeba polyphaga (Amoeba).